Reading from the N-terminus, the 25-residue chain is Inorganic pyrophosphatase (25 aa).

As to quaternary structure, monomer. The cofactor is Mg(2+).

The enzyme catalyses diphosphate + H2O = 2 phosphate + H(+). The polypeptide is Inorganic pyrophosphatase (Cyanophora paradoxa).